The chain runs to 380 residues: E3 ubiquitin-protein ligase RNF13 (380 aa).

The N-terminal stretch at Met-1 to Ala-34 is a signal peptide. At Asp-35 to Tyr-182 the chain is on the lumenal side. The region spanning Lys-65 to Asp-160 is the PA domain. The N-linked (GlcNAc...) asparagine glycan is linked to Asn-88. Residues Tyr-183 to Ile-203 traverse the membrane as a helical segment. Residues Thr-204–Val-380 are Cytoplasmic-facing. An RING-type; atypical zinc finger spans residues Cys-240 to Lys-282. Residues Val-285–Val-380 form a disordered region. Acidic residues-rich tracts occupy residues Ser-292–Glu-304 and Ser-339–Glu-356.

In terms of assembly, interacts with ERN1. Autoubiquitinated.

The protein localises to the endoplasmic reticulum membrane. It localises to the late endosome membrane. It is found in the lysosome membrane. The protein resides in the nucleus inner membrane. The catalysed reaction is S-ubiquitinyl-[E2 ubiquitin-conjugating enzyme]-L-cysteine + [acceptor protein]-L-lysine = [E2 ubiquitin-conjugating enzyme]-L-cysteine + N(6)-ubiquitinyl-[acceptor protein]-L-lysine.. It participates in protein modification; protein ubiquitination. E3 ubiquitin-protein ligase that regulates cell proliferation. Involved in apoptosis regulation. Mediates ER stress-induced activation of JNK signaling pathway and apoptosis by promoting ERN1 activation and splicing of XBP1 mRNA. Also involved in protein trafficking and localization. The chain is E3 ubiquitin-protein ligase RNF13 (RNF13) from Bos taurus (Bovine).